A 453-amino-acid chain; its full sequence is Serine/threonine-protein phosphatase 2A 55 kDa regulatory subunit B delta isoform (453 aa).

WD repeat units lie at residues 32 to 71 (AEAD…KGRA), 97 to 138 (EIEE…KRAE), 181 to 219 (AHTY…RSFN), and 230 to 270 (ELTE…LCDR). Ser-285 bears the Phosphoserine mark. WD repeat units follow at residues 289 to 327 (EIIS…RPVE), 344 to 385 (ENDC…DVTL), and 420 to 452 (DFNK…QDKI). A Phosphotyrosine modification is found at Tyr-305. The residue at position 308 (Thr-308) is a Phosphothreonine. The segment at 385-406 (LEASRENSKPRASLKPRKVCSG) is disordered.

Belongs to the phosphatase 2A regulatory subunit B family. In terms of assembly, PP2A consists of a common heterodimeric core enzyme, composed of a 36 kDa catalytic subunit (subunit C) and a 65 kDa constant regulatory subunit (PR65 or subunit A), that associates with a variety of regulatory subunits. Proteins that associate with the core dimer include three families of regulatory subunits B (the R2/B/PR55/B55, R3/B''/PR72/PR130/PR59 and R5/B'/B56 families), the 48 kDa variable regulatory subunit, viral proteins, and cell signaling molecules. Interacts with ENSA (when phosphorylated at 'Ser-67') and ARPP19 (when phosphorylated at 'Ser-62'), leading to inhibit PP2A activity. Interacts with IER5. Widely expressed with high levels in brain, heart, placenta, skeletal muscle, testis, thymus and spleen.

The protein resides in the cytoplasm. In terms of biological role, substrate-recognition subunit of protein phosphatase 2A (PP2A) that plays a key role in cell cycle by controlling mitosis entry and exit. Involved in chromosome clustering during late mitosis by mediating dephosphorylation of MKI67. The activity of PP2A complexes containing PPP2R2D (PR55-delta) fluctuate during the cell cycle: the activity is high in interphase and low in mitosis. The sequence is that of Serine/threonine-protein phosphatase 2A 55 kDa regulatory subunit B delta isoform (Ppp2r2d) from Rattus norvegicus (Rat).